A 310-amino-acid chain; its full sequence is Tryptophan 2,3-dioxygenase (310 aa).

The segment at methionine 1–alanine 39 is disordered. Residues phenylalanine 79–histidine 83, tyrosine 141, and arginine 145 each bind substrate. Residue histidine 268 participates in heme binding. Threonine 282 lines the substrate pocket.

This sequence belongs to the tryptophan 2,3-dioxygenase family. As to quaternary structure, homotetramer. It depends on heme as a cofactor.

It carries out the reaction L-tryptophan + O2 = N-formyl-L-kynurenine. It functions in the pathway amino-acid degradation; L-tryptophan degradation via kynurenine pathway; L-kynurenine from L-tryptophan: step 1/2. Its function is as follows. Heme-dependent dioxygenase that catalyzes the oxidative cleavage of the L-tryptophan (L-Trp) pyrrole ring and converts L-tryptophan to N-formyl-L-kynurenine. Catalyzes the oxidative cleavage of the indole moiety. In Burkholderia multivorans (strain ATCC 17616 / 249), this protein is Tryptophan 2,3-dioxygenase.